The following is a 340-amino-acid chain: N-acetyl-gamma-glutamyl-phosphate reductase (340 aa).

Cys149 is a catalytic residue.

The protein belongs to the NAGSA dehydrogenase family. Type 1 subfamily.

The protein resides in the cytoplasm. The catalysed reaction is N-acetyl-L-glutamate 5-semialdehyde + phosphate + NADP(+) = N-acetyl-L-glutamyl 5-phosphate + NADPH + H(+). It participates in amino-acid biosynthesis; L-arginine biosynthesis; N(2)-acetyl-L-ornithine from L-glutamate: step 3/4. Functionally, catalyzes the NADPH-dependent reduction of N-acetyl-5-glutamyl phosphate to yield N-acetyl-L-glutamate 5-semialdehyde. This is N-acetyl-gamma-glutamyl-phosphate reductase from Vesicomyosocius okutanii subsp. Calyptogena okutanii (strain HA).